A 689-amino-acid chain; its full sequence is DNA-directed RNA polymerase subunit beta' (689 aa).

Residues C69, C71, C87, and C90 each coordinate Zn(2+). Positions 489, 491, and 493 each coordinate Mg(2+).

It belongs to the RNA polymerase beta' chain family. RpoC1 subfamily. In terms of assembly, in plastids the minimal PEP RNA polymerase catalytic core is composed of four subunits: alpha, beta, beta', and beta''. When a (nuclear-encoded) sigma factor is associated with the core the holoenzyme is formed, which can initiate transcription. Mg(2+) is required as a cofactor. Requires Zn(2+) as cofactor.

Its subcellular location is the plastid. The protein localises to the chloroplast. It carries out the reaction RNA(n) + a ribonucleoside 5'-triphosphate = RNA(n+1) + diphosphate. Functionally, DNA-dependent RNA polymerase catalyzes the transcription of DNA into RNA using the four ribonucleoside triphosphates as substrates. In Helianthus annuus (Common sunflower), this protein is DNA-directed RNA polymerase subunit beta'.